Reading from the N-terminus, the 334-residue chain is Ornithine carbamoyltransferase (334 aa).

Residues 57 to 60 (STRT), Gln84, Arg108, and 135 to 138 (HPTQ) each bind carbamoyl phosphate. L-ornithine-binding positions include Asn169, Asp233, and 237-238 (SM). Carbamoyl phosphate is bound by residues 275-276 (CL) and Arg320.

The protein belongs to the aspartate/ornithine carbamoyltransferase superfamily. OTCase family. As to quaternary structure, homotrimer.

Its subcellular location is the cytoplasm. The catalysed reaction is carbamoyl phosphate + L-ornithine = L-citrulline + phosphate + H(+). Its pathway is amino-acid biosynthesis; L-arginine biosynthesis; L-arginine from L-ornithine and carbamoyl phosphate: step 1/3. In terms of biological role, reversibly catalyzes the transfer of the carbamoyl group from carbamoyl phosphate (CP) to the N(epsilon) atom of ornithine (ORN) to produce L-citrulline. The protein is Ornithine carbamoyltransferase of Vibrio vulnificus (strain CMCP6).